Here is a 282-residue protein sequence, read N- to C-terminus: HTH-type transcriptional activator RhaR (282 aa).

An HTH araC/xylS-type domain is found at 179–277 (DKLITALANS…GMTPSQWRHL (99 aa)). DNA-binding regions (H-T-H motif) lie at residues 196–217 (DAFC…RAQT) and 244–267 (ISEI…TRET).

Binds DNA as a dimer.

It localises to the cytoplasm. Activates expression of the rhaSR operon in response to L-rhamnose. In Salmonella arizonae (strain ATCC BAA-731 / CDC346-86 / RSK2980), this protein is HTH-type transcriptional activator RhaR.